Here is a 717-residue protein sequence, read N- to C-terminus: Delta-1-pyrroline-5-carboxylate synthase (717 aa).

The segment at 1-296 is glutamate 5-kinase; it reads METVDSTRAF…WASIGETDAR (296 aa). Positions 60, 157, and 176 each coordinate substrate. ATP is bound by residues 196–197 and 236–242; these read SD and RGGMTAK. Positions 297 to 717 are gamma-glutamyl phosphate reductase; it reads EMAVAARACS…YSHKDLTQQG (421 aa).

In the N-terminal section; belongs to the glutamate 5-kinase family. It in the C-terminal section; belongs to the gamma-glutamyl phosphate reductase family. As to expression, expressed at high levels in leaves and is inducible in roots subjected to salt stress.

It carries out the reaction L-glutamate + ATP = L-glutamyl 5-phosphate + ADP. The enzyme catalyses L-glutamate 5-semialdehyde + phosphate + NADP(+) = L-glutamyl 5-phosphate + NADPH + H(+). The protein operates within amino-acid biosynthesis; L-proline biosynthesis; L-glutamate 5-semialdehyde from L-glutamate: step 1/2. Its pathway is amino-acid biosynthesis; L-proline biosynthesis; L-glutamate 5-semialdehyde from L-glutamate: step 2/2. With respect to regulation, feedback regulated by proline. Functionally, P5CS plays a key role in proline biosynthesis, leading to osmoregulation in plants. The protein is Delta-1-pyrroline-5-carboxylate synthase (PRO2) of Solanum lycopersicum (Tomato).